The sequence spans 355 residues: UDP-N-acetylglucosamine--N-acetylmuramyl-(pentapeptide) pyrophosphoryl-undecaprenol N-acetylglucosamine transferase (355 aa).

UDP-N-acetyl-alpha-D-glucosamine-binding residues include R166, S196, and Q290.

This sequence belongs to the glycosyltransferase 28 family. MurG subfamily.

Its subcellular location is the cell membrane. The catalysed reaction is Mur2Ac(oyl-L-Ala-gamma-D-Glu-L-Lys-D-Ala-D-Ala)-di-trans,octa-cis-undecaprenyl diphosphate + UDP-N-acetyl-alpha-D-glucosamine = beta-D-GlcNAc-(1-&gt;4)-Mur2Ac(oyl-L-Ala-gamma-D-Glu-L-Lys-D-Ala-D-Ala)-di-trans,octa-cis-undecaprenyl diphosphate + UDP + H(+). It participates in cell wall biogenesis; peptidoglycan biosynthesis. In terms of biological role, cell wall formation. Catalyzes the transfer of a GlcNAc subunit on undecaprenyl-pyrophosphoryl-MurNAc-pentapeptide (lipid intermediate I) to form undecaprenyl-pyrophosphoryl-MurNAc-(pentapeptide)GlcNAc (lipid intermediate II). This Staphylococcus haemolyticus (strain JCSC1435) protein is UDP-N-acetylglucosamine--N-acetylmuramyl-(pentapeptide) pyrophosphoryl-undecaprenol N-acetylglucosamine transferase.